We begin with the raw amino-acid sequence, 73 residues long: Guanine nucleotide-binding protein G(I)/G(S)/G(O) subunit gamma-11 (73 aa).

Positions 51 to 73 (DPLVKGIPEDKNPFKEKGSCVIS) are disordered. The residue at position 70 (Cys-70) is a Cysteine methyl ester. Cys-70 carries S-farnesyl cysteine lipidation. Positions 71–73 (VIS) are cleaved as a propeptide — removed in mature form.

This sequence belongs to the G protein gamma family. In terms of assembly, g proteins are composed of 3 units, alpha, beta and gamma. Interacts with beta-1 and beta-3, but not with beta-2. As to expression, abundantly expressed in all tissues tested except for brain.

Its subcellular location is the cell membrane. Functionally, guanine nucleotide-binding proteins (G proteins) are involved as a modulator or transducer in various transmembrane signaling systems. The beta and gamma chains are required for the GTPase activity, for replacement of GDP by GTP, and for G protein-effector interaction. The chain is Guanine nucleotide-binding protein G(I)/G(S)/G(O) subunit gamma-11 (GNG11) from Homo sapiens (Human).